The chain runs to 431 residues: CCA-adding enzyme (431 aa).

Ser50 and Lys53 together coordinate ATP. CTP-binding residues include Ser50 and Lys53. Residues Asp61, Asp63, and Asp112 each coordinate Mg(2+). 3 residues coordinate ATP: His135, Lys155, and Tyr164. CTP is bound by residues His135, Lys155, and Tyr164.

Belongs to the tRNA nucleotidyltransferase/poly(A) polymerase family. Archaeal CCA-adding enzyme subfamily. In terms of assembly, homodimer. Mg(2+) serves as cofactor.

It carries out the reaction a tRNA precursor + 2 CTP + ATP = a tRNA with a 3' CCA end + 3 diphosphate. It catalyses the reaction a tRNA with a 3' CCA end + 2 CTP + ATP = a tRNA with a 3' CCACCA end + 3 diphosphate. In terms of biological role, catalyzes the addition and repair of the essential 3'-terminal CCA sequence in tRNAs without using a nucleic acid template. Adds these three nucleotides in the order of C, C, and A to the tRNA nucleotide-73, using CTP and ATP as substrates and producing inorganic pyrophosphate. tRNA 3'-terminal CCA addition is required both for tRNA processing and repair. Also involved in tRNA surveillance by mediating tandem CCA addition to generate a CCACCA at the 3' terminus of unstable tRNAs. While stable tRNAs receive only 3'-terminal CCA, unstable tRNAs are marked with CCACCA and rapidly degraded. The protein is CCA-adding enzyme of Thermoplasma acidophilum (strain ATCC 25905 / DSM 1728 / JCM 9062 / NBRC 15155 / AMRC-C165).